We begin with the raw amino-acid sequence, 172 residues long: MSVPEPPPPDGVLTGPSDSLEAGEPTPGLSDTSPDEGLIEDFPVDDRAVEHLVGGLLSHYLPDLQRSKRALQELTQNQVVLLDTLEQEISKFKECHSMLDINALFTEAKHYHAKLVTIRKEMLLLHEKTSKLKKRALKLQQKRQREELEREQQREKEFEREKQLTAKPAKRT.

The span at 1 to 10 (MSVPEPPPPD) shows a compositional bias: pro residues. Disordered stretches follow at residues 1–37 (MSVP…PDEG) and 141–172 (QKRQ…AKRT). A coiled-coil region spans residues 63–167 (DLQRSKRALQ…FEREKQLTAK (105 aa)). Positions 143–164 (RQREELEREQQREKEFEREKQL) are enriched in basic and acidic residues.

It belongs to the BLOC1S6 family. As to quaternary structure, octamer composed of one copy each BLOC1S1, BLOC1S2, BLOC1S3, BLOC1S4, BLOC1S5, BLOC1S6, DTNBP1/BLOC1S7 and SNAPIN/BLOC1S8. Interacts with SNAP47. Homodimer. Component of the biogenesis of lysosome-related organelles complex 1 (BLOC-1) composed of BLOC1S1, BLOC1S2, BLOC1S3, BLOC1S4, BLOC1S5, BLOC1S6, DTNBP1/BLOC1S7 and SNAPIN/BLOC1S8. Interacts with BLOC1S4, BLOC1S5, DTNBP1/BLOC1S7, F-actin, SNAP25 isoform 1 and STX12. In terms of processing, phosphorylated. In terms of tissue distribution, expressed in liver, kidney and spleen (at protein level). Ubiquitously expressed, with the highest expression levels observed in brain, heart, liver and kidney.

The protein resides in the cytoplasm. Its subcellular location is the membrane. Component of the BLOC-1 complex, a complex that is required for normal biogenesis of lysosome-related organelles (LRO), such as platelet dense granules and melanosomes. In concert with the AP-3 complex, the BLOC-1 complex is required to target membrane protein cargos into vesicles assembled at cell bodies for delivery into neurites and nerve terminals. The BLOC-1 complex, in association with SNARE proteins, is also proposed to be involved in neurite extension. May play a role in intracellular vesicle trafficking, particularly in the vesicle-docking and fusion process. This Mus musculus (Mouse) protein is Biogenesis of lysosome-related organelles complex 1 subunit 6 (Bloc1s6).